We begin with the raw amino-acid sequence, 539 residues long: Heparanase-like protein 2 (539 aa).

The signal sequence occupies residues 1–21 (MGFNVVVFLSCLLLLPPVTFG). N-linked (GlcNAc...) asparagine glycosylation is found at Asn143, Asn163, and Asn181. Catalysis depends on Glu198, which acts as the Proton donor. An N-linked (GlcNAc...) asparagine glycan is attached at Asn300. The active-site Nucleophile is Glu316. The N-linked (GlcNAc...) asparagine glycan is linked to Asn421.

This sequence belongs to the glycosyl hydrolase 79 family.

The protein localises to the lysosome membrane. Its subcellular location is the secreted. In terms of biological role, endoglycosidase which is a cell surface and extracellular matrix-degrading enzyme. Cleaves heparan sulfate proteoglycans (HSPGs) into heparan sulfate side chains and core proteoglycans. In Arabidopsis thaliana (Mouse-ear cress), this protein is Heparanase-like protein 2.